The chain runs to 594 residues: UvrABC system protein C (594 aa).

The 78-residue stretch at 15 to 92 folds into the GIY-YIG domain; it reads DKPGCYQMKN…IQKFQPYYNI (78 aa). The UVR domain maps to 197-232; it reads AKIKQSLQTKMQKASEAMEFERAADIRDQIHYIEVT.

The protein belongs to the UvrC family. Interacts with UvrB in an incision complex.

It is found in the cytoplasm. The UvrABC repair system catalyzes the recognition and processing of DNA lesions. UvrC both incises the 5' and 3' sides of the lesion. The N-terminal half is responsible for the 3' incision and the C-terminal half is responsible for the 5' incision. This Pediococcus pentosaceus (strain ATCC 25745 / CCUG 21536 / LMG 10740 / 183-1w) protein is UvrABC system protein C.